Here is a 191-residue protein sequence, read N- to C-terminus: CASP-like protein 1D1 (191 aa).

Over 1–22 the chain is Cytoplasmic; that stretch reads MTSTSKDTPESGYAVPPPNLFG. A helical transmembrane segment spans residues 23-43; the sequence is VDFGLRLLLLASAVSALVVLV. The Extracellular segment spans residues 44-73; that stretch reads TSKQTESIPTSLPPPFPAFISRDAKFQHSP. The chain crosses the membrane as a helical span at residues 74-94; that stretch reads AFIYLLVALSVTCFYSIITMV. Residues 95–118 lie on the Cytoplasmic side of the membrane; the sequence is ASFAAITSPSSSPRMLFHLVLSDA. The helical transmembrane segment at 119-139 threads the bilayer; it reads VMAGVMASAAGTAGSVAYLGL. Residues 140–160 are Extracellular-facing; sequence KGNSHVNWNKVCNVYDKFCRH. A helical membrane pass occupies residues 161–181; it reads VGSSAAVSLVASVLLVSLVVL. Residues 182 to 191 are Cytoplasmic-facing; the sequence is SSYSLYRRCR.

Belongs to the Casparian strip membrane proteins (CASP) family. In terms of assembly, homodimer and heterodimers.

The protein resides in the cell membrane. The sequence is that of CASP-like protein 1D1 from Musa acuminata (Banana).